Here is a 394-residue protein sequence, read N- to C-terminus: Phosphoglycerate kinase (394 aa).

Substrate-binding positions include 21–23 (DFN), arginine 36, 59–62 (HLGR), arginine 118, and arginine 151. Residue serine 183 is modified to Phosphoserine. 2 residues coordinate ATP: lysine 201 and glycine 292. Phosphothreonine is present on threonine 299. ATP is bound by residues glutamate 323 and 350–353 (GGDS).

It belongs to the phosphoglycerate kinase family. Monomer.

Its subcellular location is the cytoplasm. It catalyses the reaction (2R)-3-phosphoglycerate + ATP = (2R)-3-phospho-glyceroyl phosphate + ADP. It functions in the pathway carbohydrate degradation; glycolysis; pyruvate from D-glyceraldehyde 3-phosphate: step 2/5. The protein is Phosphoglycerate kinase of Bacillus cereus (strain Q1).